Consider the following 533-residue polypeptide: CTP synthase (533 aa).

Residues 1-265 (MTKFIFVTGG…ARYLVRRLGL (265 aa)) form an amidoligase domain region. Serine 13 contacts CTP. Serine 13 is a binding site for UTP. An ATP-binding site is contributed by 14–19 (GLGKGI). Tyrosine 54 serves as a coordination point for L-glutamine. An ATP-binding site is contributed by aspartate 71. The Mg(2+) site is built by aspartate 71 and glutamate 139. CTP is bound by residues 146 to 148 (DIE), 186 to 191 (KTKPTQ), and lysine 222. Residues 186–191 (KTKPTQ) and lysine 222 each bind UTP. The 243-residue stretch at 290-532 (EIAIVGKYVK…VRAARERKYG (243 aa)) folds into the Glutamine amidotransferase type-1 domain. Glycine 351 is an L-glutamine binding site. Cysteine 378 acts as the Nucleophile; for glutamine hydrolysis in catalysis. L-glutamine-binding positions include 379-382 (FGFQ), glutamate 402, and arginine 459. Active-site residues include histidine 505 and glutamate 507.

The protein belongs to the CTP synthase family. As to quaternary structure, homotetramer.

The catalysed reaction is UTP + L-glutamine + ATP + H2O = CTP + L-glutamate + ADP + phosphate + 2 H(+). It carries out the reaction L-glutamine + H2O = L-glutamate + NH4(+). It catalyses the reaction UTP + NH4(+) + ATP = CTP + ADP + phosphate + 2 H(+). The protein operates within pyrimidine metabolism; CTP biosynthesis via de novo pathway; CTP from UDP: step 2/2. Allosterically activated by GTP, when glutamine is the substrate; GTP has no effect on the reaction when ammonia is the substrate. The allosteric effector GTP functions by stabilizing the protein conformation that binds the tetrahedral intermediate(s) formed during glutamine hydrolysis. Inhibited by the product CTP, via allosteric rather than competitive inhibition. Functionally, catalyzes the ATP-dependent amination of UTP to CTP with either L-glutamine or ammonia as the source of nitrogen. Regulates intracellular CTP levels through interactions with the four ribonucleotide triphosphates. The sequence is that of CTP synthase from Thermococcus gammatolerans (strain DSM 15229 / JCM 11827 / EJ3).